A 422-amino-acid polypeptide reads, in one-letter code: Glucose-1-phosphate adenylyltransferase (422 aa).

Alpha-D-glucose 1-phosphate contacts are provided by residues Tyr-110, Gly-175, 190-191, and Ser-208; that span reads EK.

It belongs to the bacterial/plant glucose-1-phosphate adenylyltransferase family. Homotetramer.

It carries out the reaction alpha-D-glucose 1-phosphate + ATP + H(+) = ADP-alpha-D-glucose + diphosphate. It participates in glycan biosynthesis; glycogen biosynthesis. Its function is as follows. Involved in the biosynthesis of ADP-glucose, a building block required for the elongation reactions to produce glycogen. Catalyzes the reaction between ATP and alpha-D-glucose 1-phosphate (G1P) to produce pyrophosphate and ADP-Glc. The polypeptide is Glucose-1-phosphate adenylyltransferase (Hydrogenovibrio crunogenus (strain DSM 25203 / XCL-2) (Thiomicrospira crunogena)).